A 267-amino-acid polypeptide reads, in one-letter code: Small ribosomal subunit protein uS2 (267 aa).

Residues 233–250 (RAESDKAETDKVEVEGKG) show a composition bias toward basic and acidic residues. The disordered stretch occupies residues 233–267 (RAESDKAETDKVEVEGKGEAPAAEAAEVVESADKA). Low complexity predominate over residues 251 to 261 (EAPAAEAAEVV).

It belongs to the universal ribosomal protein uS2 family.

The sequence is that of Small ribosomal subunit protein uS2 from Syntrophotalea carbinolica (strain DSM 2380 / NBRC 103641 / GraBd1) (Pelobacter carbinolicus).